We begin with the raw amino-acid sequence, 730 residues long: Heterogeneous nuclear ribonucleoprotein M (730 aa).

Positions 1-13 (MAAGVEAAAEVAA) are enriched in low complexity. Residues 1–62 (MAAGVEAAAE…NIKRGGNRFE (62 aa)) form a disordered region. An N-acetylalanine modification is found at A2. A Glycyl lysine isopeptide (Lys-Gly) (interchain with G-Cter in SUMO2) cross-link involves residue K17. S29 carries the phosphoserine modification. Residue K37 forms a Glycyl lysine isopeptide (Lys-Gly) (interchain with G-Cter in SUMO2) linkage. Over residues 38-50 (GEGERPAQNEKRK) the composition is skewed to basic and acidic residues. Glycyl lysine isopeptide (Lys-Gly) (interchain with G-Cter in SUMO2) cross-links involve residues K69 and K83. RRM domains are found at residues 71–149 (YRAF…EDPD) and 204–281 (STVF…MDER). Residue S86 is modified to Phosphoserine. Glycyl lysine isopeptide (Lys-Gly) (interchain with G-Cter in SUMO2) cross-links involve residues K88 and K127. K134 is subject to N6-acetyllysine; alternate. Residue K134 forms a Glycyl lysine isopeptide (Lys-Gly) (interchain with G-Cter in SUMO2); alternate linkage. Glycyl lysine isopeptide (Lys-Gly) (interchain with G-Cter in SUMO2) cross-links involve residues K143 and K145. S204 carries the phosphoserine modification. Residue K221 forms a Glycyl lysine isopeptide (Lys-Gly) (interchain with G-Cter in SUMO2) linkage. At K277 the chain carries N6-acetyllysine; alternate. K277 participates in a covalent cross-link: Glycyl lysine isopeptide (Lys-Gly) (interchain with G-Cter in SUMO2); alternate. Residues K285 and K345 each participate in a glycyl lysine isopeptide (Lys-Gly) (interchain with G-Cter in SUMO2) cross-link. Phosphoserine is present on residues S365 and S377. Residues K381 and K388 each participate in a glycyl lysine isopeptide (Lys-Gly) (interchain with G-Cter in SUMO2) cross-link. The residue at position 397 (S397) is a Phosphoserine. Tandem repeats lie at residues 400–405 (GIERMG), 407–412 (GIDRLG), 415–420 (GMERMG), and 426–431 (GMDRVG). The segment at 400-608 (GIERMGPGID…ALGAGIERMG (209 aa)) is 27 X 6 AA repeats of [GEVSTPAN]-[ILMV]-[DE]-[RH]-[MLVI]-[GAV]. S432 carries the post-translational modification Phosphoserine. 3 tandem repeats follow at residues 433–438 (EIERMG), 440–445 (VMDRMG), and 446–451 (SVERMG). S452 carries the post-translational modification Phosphoserine. A run of 4 repeats spans residues 453–458 (GIERMG), 461–466 (GLDHMA), 468–473 (SIERMG), and 475–480 (TMERIG). S468 bears the Phosphoserine mark. S481 bears the Phosphoserine mark. 16 repeat units span residues 482–487 (GVERMG), 493–498 (GLERMA), 500–505 (PIDRVG), 507–512 (TIERMG), 514–519 (GVERMG), 521–526 (AIERMG), 528–533 (SMERMV), 540–545 (GLERMG), 547–552 (VMDRMA), 554–559 (GLERMG), 562–566 (NLERM), 567–572 (GLERMG), 575–579 (SLERM), 580–585 (GLERMG), 588–593 (SLERMG), and 603–608 (GIERMG). R496 carries the post-translational modification Omega-N-methylarginine. S528 carries the phosphoserine modification. At S575 the chain carries Phosphoserine. At S588 the chain carries Phosphoserine. S618, S633, and S637 each carry phosphoserine. Residue K651 forms a Glycyl lysine isopeptide (Lys-Gly) (interchain with G-Cter in SUMO2) linkage. The region spanning 653 to 729 (CQIFVRNLPF…REIDVRIDRN (77 aa)) is the RRM 3 domain. T665 bears the Phosphothreonine mark. A Glycyl lysine isopeptide (Lys-Gly) (interchain with G-Cter in SUMO2) cross-link involves residue K667. N6-acetyllysine is present on K672. Residues K685 and K692 each participate in a glycyl lysine isopeptide (Lys-Gly) (interchain with G-Cter in SUMO2) cross-link. The residue at position 698 (K698) is an N6-acetyllysine; alternate. Residue K698 forms a Glycyl lysine isopeptide (Lys-Gly) (interchain with G-Cter in SUMO2); alternate linkage. K698 participates in a covalent cross-link: Glycyl lysine isopeptide (Lys-Gly) (interchain with G-Cter in SUMO1); alternate. A Phosphoserine modification is found at S701. Residue K716 forms a Glycyl lysine isopeptide (Lys-Gly) (interchain with G-Cter in SUMO2) linkage.

As to quaternary structure, identified in the spliceosome C complex. Interacts with PPIA/CYPA. Post-translationally, sumoylated.

It localises to the nucleus. It is found in the nucleolus. In terms of biological role, pre-mRNA binding protein in vivo, binds avidly to poly(G) and poly(U) RNA homopolymers in vitro. Involved in splicing. Acts as a receptor for carcinoembryonic antigen in Kupffer cells, may initiate a series of signaling events leading to tyrosine phosphorylation of proteins and induction of IL-1 alpha, IL-6, IL-10 and tumor necrosis factor alpha cytokines. This chain is Heterogeneous nuclear ribonucleoprotein M (HNRNPM), found in Homo sapiens (Human).